The sequence spans 590 residues: Probable lysosomal cobalamin transporter (590 aa).

10 helical membrane passes run 8–28 (LIWV…SIFI), 46–66 (IFTL…VALV), 94–114 (AVAY…VVPF), 145–165 (TVAF…VPIG), 190–210 (ALTF…VLYT), 314–334 (LLSG…MLLT), 348–367 (CGYI…VFVH), 376–396 (YILF…GIAT), 421–441 (ITTV…SMVV), and 508–528 (FFGI…LLVF). The interval 567-590 (WEDITGRASRSPQVSGSAGRGTRE) is disordered.

Belongs to the LIMR family. LMBRD1 subfamily.

The protein resides in the lysosome membrane. Probable lysosomal cobalamin transporter. Required to export cobalamin from lysosomes allowing its conversion to cofactors. The protein is Probable lysosomal cobalamin transporter of Ajellomyces capsulatus (strain NAm1 / WU24) (Darling's disease fungus).